We begin with the raw amino-acid sequence, 348 residues long: Lipoyl synthase (348 aa).

The tract at residues 1 to 45 (MSESAKPRITSGSKFRNEHGFSAIKDGVKRSSSNTEGKSLERKPK) is disordered. [4Fe-4S] cluster is bound by residues C73, C78, C84, C99, C103, C106, and S314. The 219-residue stretch at 85–303 (WTNGTATIMV…RDIGLEKGFM (219 aa)) folds into the Radical SAM core domain.

The protein belongs to the radical SAM superfamily. Lipoyl synthase family. It depends on [4Fe-4S] cluster as a cofactor.

The protein resides in the cytoplasm. It catalyses the reaction [[Fe-S] cluster scaffold protein carrying a second [4Fe-4S](2+) cluster] + N(6)-octanoyl-L-lysyl-[protein] + 2 oxidized [2Fe-2S]-[ferredoxin] + 2 S-adenosyl-L-methionine + 4 H(+) = [[Fe-S] cluster scaffold protein] + N(6)-[(R)-dihydrolipoyl]-L-lysyl-[protein] + 4 Fe(3+) + 2 hydrogen sulfide + 2 5'-deoxyadenosine + 2 L-methionine + 2 reduced [2Fe-2S]-[ferredoxin]. The protein operates within protein modification; protein lipoylation via endogenous pathway; protein N(6)-(lipoyl)lysine from octanoyl-[acyl-carrier-protein]: step 2/2. Catalyzes the radical-mediated insertion of two sulfur atoms into the C-6 and C-8 positions of the octanoyl moiety bound to the lipoyl domains of lipoate-dependent enzymes, thereby converting the octanoylated domains into lipoylated derivatives. The sequence is that of Lipoyl synthase from Marinobacter nauticus (strain ATCC 700491 / DSM 11845 / VT8) (Marinobacter aquaeolei).